Consider the following 252-residue polypeptide: Isoprenyl transferase 2 (252 aa).

Aspartate 26 is an active-site residue. Aspartate 26 is a Mg(2+) binding site. Substrate is bound by residues glycine 27–arginine 30, tryptophan 31, arginine 39, histidine 43, and serine 71–glutamate 73. The Proton acceptor role is filled by asparagine 74. Residues tryptophan 75, arginine 77, arginine 194, and arginine 200 to serine 202 contribute to the substrate site. Glutamate 213 provides a ligand contact to Mg(2+).

This sequence belongs to the UPP synthase family. In terms of assembly, homodimer. Requires Mg(2+) as cofactor.

Catalyzes the condensation of isopentenyl diphosphate (IPP) with allylic pyrophosphates generating different type of terpenoids. This chain is Isoprenyl transferase 2, found in Bradyrhizobium diazoefficiens (strain JCM 10833 / BCRC 13528 / IAM 13628 / NBRC 14792 / USDA 110).